An 898-amino-acid polypeptide reads, in one-letter code: Sodium/hydrogen exchanger 5 (898 aa).

At 1–48 (MLSAALLLLPGLPLAGAGATEEPTQESGPLGEPPPGLALFRWQWHEVE) the chain is on the cytoplasmic side. Residues 49–69 (APYLVALWILVASLAKIVFHL) traverse the membrane as a helical segment. Residues 70-76 (SRKVTSL) are Extracellular-facing. A helical membrane pass occupies residues 77–97 (VPESCLLILLGLVLGGIVLAV). At 98 to 106 (AKKAEYQLE) the chain is on the cytoplasmic side. The chain crosses the membrane as a helical span at residues 107–127 (PGTFFLFLLPPIVLDSGYFMP). The Extracellular portion of the chain corresponds to 128-137 (SRLFFDNLGA). A helical transmembrane segment spans residues 138 to 158 (ILTYAVVGTLWNAFTTGVALW). The Cytoplasmic portion of the chain corresponds to 159–176 (GLQQAGLVAPRVQAGLLD). A helical membrane pass occupies residues 177–197 (FLLFGSLISAVDPVAVLAVFE). The Extracellular segment spans residues 198–203 (EVHVNQ). The helical transmembrane segment at 204 to 224 (TLFIIIFGESLLNDAVTVVLY) threads the bilayer. Over 225 to 249 (KVCNSFVEMGSANVQATDYLKGVAS) the chain is Cytoplasmic. Residues 250-270 (LFVVSLGGAAVGLVFAFLLAL) traverse the membrane as a helical segment. The Extracellular segment spans residues 271-279 (TTRFTKRVR). Residues 280-300 (IIEPLLVFLLAYAAYLTAEMA) form a helical membrane-spanning segment. Residues 301–334 (SLSAILAVTMCGLGCKKYVEANISHKSRTAVKYT) lie on the Cytoplasmic side of the membrane. The chain crosses the membrane as a helical span at residues 335 to 355 (MKTLASCAETVIFMLLGISAV). Residues 356–363 (DSSKWAWD) are Extracellular-facing. Residues 364 to 384 (SGLVLGTLFFILFFRALGVVL) form a helical membrane-spanning segment. Residues 385 to 401 (QTWALNQFRLVPLDKID) lie on the Cytoplasmic side of the membrane. Residues 402–422 (QVVMSYGGLRGAVAFALVILL) traverse the membrane as a helical segment. The Extracellular portion of the chain corresponds to 423–431 (DRTKVPAKD). Residues 432-452 (YFVATTIVVVFFTVIVQGLTI) traverse the membrane as a helical segment. The Cytoplasmic portion of the chain corresponds to 453–898 (KPLVKWLRVK…CIQFNRGGRL (446 aa)). 2 disordered regions span residues 660-693 (FTKS…RDLG) and 826-866 (EEPQ…PQQE). Basic residues predominate over residues 663–675 (SKPRPRKTSHKKK). Residues 857 to 866 (ESSADIPQQE) show a composition bias toward polar residues.

The protein belongs to the monovalent cation:proton antiporter 1 (CPA1) transporter (TC 2.A.36) family. As to quaternary structure, interacts with CHP1 and CHP2. Interacts with ARRB2; facilitates the endocytosis of SLC9A5 from the plasma membrane. Interacts with RACK1; this interaction positively regulates SLC9A5 activity and promote SLC9A5 localization to focal adhesions. Interacts with SCAMP2; this interaction regulates SLC9A5 cell-surface targeting and SLC9A5 activity. Phosphorylated by PRKAA2; promotes its accumulation at the cell surface. Phosphorylated by CSNK2A1 in a manner favoring its beta-arrestin binding and endocytosis. Highest expression level is detected in brain. Expressed in hippocampal neurons (at protein level).

The protein localises to the cell membrane. It is found in the recycling endosome membrane. The protein resides in the cell projection. Its subcellular location is the dendritic spine membrane. It localises to the synaptic cell membrane. The protein localises to the cell junction. It is found in the focal adhesion. The catalysed reaction is Na(+)(in) + H(+)(out) = Na(+)(out) + H(+)(in). Its function is as follows. Plasma membrane Na(+)/H(+) antiporter. Mediates the electroneutral exchange of intracellular H(+) ions for extracellular Na(+) in 1:1 stoichiometry. Responsible for regulating intracellular pH homeostasis, in particular in neural tissues. Acts as a negative regulator of dendritic spine growth. Plays a role in postsynaptic remodeling and signaling. Can also contribute to organellar pH regulation, with consequences for receptor tyrosine kinase trafficking. This Mus musculus (Mouse) protein is Sodium/hydrogen exchanger 5 (Slc9a5).